Here is a 551-residue protein sequence, read N- to C-terminus: Glutamate--tRNA ligase (551 aa).

Residues 100-110 carry the 'HIGH' region motif; that stretch reads PNPNGPPTLGS.

Belongs to the class-I aminoacyl-tRNA synthetase family. Glutamate--tRNA ligase type 2 subfamily.

The protein localises to the cytoplasm. It catalyses the reaction tRNA(Glu) + L-glutamate + ATP = L-glutamyl-tRNA(Glu) + AMP + diphosphate. Functionally, catalyzes the attachment of glutamate to tRNA(Glu) in a two-step reaction: glutamate is first activated by ATP to form Glu-AMP and then transferred to the acceptor end of tRNA(Glu). The sequence is that of Glutamate--tRNA ligase from Archaeoglobus fulgidus (strain ATCC 49558 / DSM 4304 / JCM 9628 / NBRC 100126 / VC-16).